A 343-amino-acid polypeptide reads, in one-letter code: Transmembrane protein 120A (343 aa).

Residues Met-1 to Glu-132 are Cytoplasmic-facing. Lys-130 serves as a coordination point for CoA. A helical transmembrane segment spans residues Tyr-133 to Arg-152. At Phe-153–Arg-158 the chain is on the extracellular side. Residues Val-159–Ile-177 form a helical membrane-spanning segment. Over Arg-178 to Lys-190 the chain is Cytoplasmic. Residues Ser-187 and Arg-188 each contribute to the CoA site. The helical transmembrane segment at Gly-191–Thr-209 threads the bilayer. Over Trp-210–Lys-218 the chain is Extracellular. The helical transmembrane segment at Phe-219–Tyr-240 threads the bilayer. Positions 237, 240, 241, and 283 each coordinate CoA. Topologically, residues Gln-241–Arg-270 are cytoplasmic. Residues Gly-271 to Phe-294 form a helical membrane-spanning segment. At Asn-295–Glu-304 the chain is on the extracellular side. A helical transmembrane segment spans residues Trp-305 to His-330. At Gln-331–Asp-343 the chain is on the cytoplasmic side. Lys-332 serves as a coordination point for CoA.

This sequence belongs to the TMEM120 family. As to quaternary structure, homodimer. Forms heterooligomer with TMEM120B. Interacts with PKD2; TMEM120A inhibits PKD2 channel activity through the physical association of PKD2 with TMEM120A.

It is found in the cell membrane. It localises to the nucleus inner membrane. The protein localises to the endoplasmic reticulum. Multifunctional protein involved in mechanosensation, and plays an essential role in lipid metabolism and adipocyte differentiation. May function as a potential ion channel involved in sensing mechanical stimuli. Mediates the mechanosensitivity of the PKD2-TMEM120A channel complex through direct physical interaction. TMEM120A seems to affect mechanosensation by inhibiting PIEZO2 channels, possibly by altering cellular lipid content. TMEM120A is structurally similar to a lipid-modifying enzyme, ELOVL7, and contains a bound coenzyme A molecule, which suggests it might function as an enzyme in lipid metabolism. Additionnaly, implicated in innate immune response against Zika virus. Acts as a key activator of the antiviral signaling involving STING1. The chain is Transmembrane protein 120A from Rattus norvegicus (Rat).